The primary structure comprises 189 residues: Large ribosomal subunit protein eL19A (189 aa).

Lys-21 is covalently cross-linked (Glycyl lysine isopeptide (Lys-Gly) (interchain with G-Cter in ubiquitin)). Ser-30 and Ser-37 each carry phosphoserine. Residues Lys-53 and Lys-60 each participate in a glycyl lysine isopeptide (Lys-Gly) (interchain with G-Cter in ubiquitin) cross-link. Residues 58–85 (HSKSRTRAHAQSKREGRHSGYGKRKGTR) are disordered. Residues 59–68 (SKSRTRAHAQ) are compositionally biased toward basic residues. Ser-91 carries the post-translational modification Phosphoserine. Glycyl lysine isopeptide (Lys-Gly) (interchain with G-Cter in ubiquitin) cross-links involve residues Lys-146 and Lys-186. Residues 164–189 (LKNRAARDRRAQRVAEKRDALLKEDA) form a disordered region.

It belongs to the eukaryotic ribosomal protein eL19 family. In terms of assembly, component of the large ribosomal subunit (LSU). Mature yeast ribosomes consist of a small (40S) and a large (60S) subunit. The 40S small subunit contains 1 molecule of ribosomal RNA (18S rRNA) and 33 different proteins (encoded by 57 genes). The large 60S subunit contains 3 rRNA molecules (25S, 5.8S and 5S rRNA) and 46 different proteins (encoded by 81 genes). eL19 lies in close proximity to the binding site for eukaryotic initiation factor eIF4G.

The protein localises to the cytoplasm. Its function is as follows. Component of the ribosome, a large ribonucleoprotein complex responsible for the synthesis of proteins in the cell. The small ribosomal subunit (SSU) binds messenger RNAs (mRNAs) and translates the encoded message by selecting cognate aminoacyl-transfer RNA (tRNA) molecules. The large subunit (LSU) contains the ribosomal catalytic site termed the peptidyl transferase center (PTC), which catalyzes the formation of peptide bonds, thereby polymerizing the amino acids delivered by tRNAs into a polypeptide chain. The nascent polypeptides leave the ribosome through a tunnel in the LSU and interact with protein factors that function in enzymatic processing, targeting, and the membrane insertion of nascent chains at the exit of the ribosomal tunnel. eL19 may play a role in the last stages of translation initiation, in particular subunit joining and shedding/releasing factors. The protein is Large ribosomal subunit protein eL19A of Saccharomyces cerevisiae (strain ATCC 204508 / S288c) (Baker's yeast).